We begin with the raw amino-acid sequence, 82 residues long: Small ribosomal subunit protein bS18 (82 aa).

The interval M1–C20 is disordered.

Belongs to the bacterial ribosomal protein bS18 family. Part of the 30S ribosomal subunit. Forms a tight heterodimer with protein bS6.

Its function is as follows. Binds as a heterodimer with protein bS6 to the central domain of the 16S rRNA, where it helps stabilize the platform of the 30S subunit. In Rhizobium johnstonii (strain DSM 114642 / LMG 32736 / 3841) (Rhizobium leguminosarum bv. viciae), this protein is Small ribosomal subunit protein bS18.